A 440-amino-acid chain; its full sequence is Sialyltransferase-like protein 2 (440 aa).

The Cytoplasmic portion of the chain corresponds to 1-5 (MKLLH). The helical; Signal-anchor for type II membrane protein transmembrane segment at 6-26 (LIFLLALTTGISAVLIYIIGV) threads the bilayer. At 27–440 (SNLYESNRFT…HGQLCITPAD (414 aa)) the chain is on the lumenal side. N-linked (GlcNAc...) asparagine glycans are attached at residues asparagine 113 and asparagine 149.

The protein belongs to the glycosyltransferase 29 family.

The protein resides in the golgi apparatus membrane. Its function is as follows. May be involved in the transfer of 2-keto-3-deoxy-D-lyxo-heptulosaric acid (Dha) and/or 2-keto-3-deoxy-D-manno-octulosonic acid (Kdo) on the homogalacturonan backbone of rhamnogalacturonan-II. Required for efficient pollen grain germination and pollen tube elongation. Does not possess sialyltransferase activity in vitro. The sequence is that of Sialyltransferase-like protein 2 from Arabidopsis thaliana (Mouse-ear cress).